Here is a 239-residue protein sequence, read N- to C-terminus: AA9 family lytic polysaccharide monooxygenase C (239 aa).

Cu(2+) is bound at residue His1. Cys39 and Cys190 form a disulfide bridge. An N-linked (GlcNAc...) asparagine glycan is attached at Asn75. His84 contributes to the Cu(2+) binding site. N-linked (GlcNAc...) asparagine glycosylation is present at Asn135. 2 residues coordinate O2: His157 and Gln166. Position 168 (Tyr168) interacts with Cu(2+). N-linked (GlcNAc...) asparagine glycans are attached at residues Asn194 and Asn229.

It belongs to the polysaccharide monooxygenase AA9 family. It depends on Cu(2+) as a cofactor.

It is found in the secreted. The enzyme catalyses [(1-&gt;4)-beta-D-glucosyl]n+m + reduced acceptor + O2 = 4-dehydro-beta-D-glucosyl-[(1-&gt;4)-beta-D-glucosyl]n-1 + [(1-&gt;4)-beta-D-glucosyl]m + acceptor + H2O.. Its function is as follows. Lytic polysaccharide monooxygenase (LPMO) that depolymerizes crystalline and amorphous polysaccharides via the oxidation of scissile alpha- or beta-(1-4)-glycosidic bonds, yielding C1 or C4 oxidation products. Catalysis by LPMOs requires the reduction of the active-site copper from Cu(II) to Cu(I) by a reducing agent and H(2)O(2) or O(2) as a cosubstrate. This chain is AA9 family lytic polysaccharide monooxygenase C, found in Gloeophyllum trabeum (Brown rot fungus).